Consider the following 217-residue polypeptide: MNQTLLSSFGTPFERVEHALSALREGRGVMVLDDEDRENEGDMIFPAETMTVEQMALTIRHGSGIVCLCITEDRRKQLDLPMMVENNTSAYGTGFTVTIEAAKGVTTGVSAADRVTTVRAAIADGAKPADLHRPGHVFPLRAQPGGVLTRGGHTEATIDLVTLAGFKPAGVLCELTNDDGTMARAPECIAFAGKHNMAVVTIEDLVAYRQAHERKAS.

D-ribulose 5-phosphate is bound by residues 37–38, Asp42, 150–154, and Glu174; these read RE and RGGHT. Mg(2+) is bound at residue Glu38. A Mg(2+)-binding site is contributed by His153.

It belongs to the DHBP synthase family. As to quaternary structure, homodimer. Requires Mg(2+) as cofactor. Mn(2+) serves as cofactor.

The catalysed reaction is D-ribulose 5-phosphate = (2S)-2-hydroxy-3-oxobutyl phosphate + formate + H(+). It functions in the pathway cofactor biosynthesis; riboflavin biosynthesis; 2-hydroxy-3-oxobutyl phosphate from D-ribulose 5-phosphate: step 1/1. Its function is as follows. Catalyzes the conversion of D-ribulose 5-phosphate to formate and 3,4-dihydroxy-2-butanone 4-phosphate. The chain is 3,4-dihydroxy-2-butanone 4-phosphate synthase from Citrobacter koseri (strain ATCC BAA-895 / CDC 4225-83 / SGSC4696).